The following is a 227-amino-acid chain: E3 ubiquitin-protein ligase ZNRF1 (227 aa).

Residues 1 to 42 are disordered; it reads MGGKQSTAARSRGPFPGVSTDDSAVPPPGGAPHFGHYRTGGG. The N-myristoyl glycine moiety is linked to residue Gly-2. The segment at 2–10 is required for endosomal and lysosomal localization and myristoylation; it reads GGKQSTAAR. Phosphoserine occurs at positions 50, 52, and 53. Residues 65–105 form a disordered region; it reads GGVPFSLYTPASRGTGDSERAPGGGGSTSDSTYAHGNGYQE. At Tyr-103 the chain carries Phosphotyrosine. A Phosphoserine modification is found at Ser-123. The segment at 184-225 adopts an RING-type; atypical zinc-finger fold; sequence CVICLEELLQGDTIARLPCLCIYHKSCIDSWFEVNRSCPEHP.

In terms of assembly, interacts with AKT1, GLUL and TUBB2A. Interacts with ZNRF2. Interacts (via its RING domain) with UBE2N. Interacts (when phosphorylated) with YWHAE. Post-translationally, N-myristoylation targets ZNRF1 to intracellular membranes. In terms of processing, phosphorylated by SRC at Tyr-103; leading to 'Lys-63'-linked ubiquitination of TLR3, lysosomal trafficking and degradation.

The protein localises to the endosome. Its subcellular location is the lysosome. The protein resides in the membrane. It is found in the cytoplasmic vesicle. It localises to the secretory vesicle. The protein localises to the synaptic vesicle membrane. The catalysed reaction is S-ubiquitinyl-[E2 ubiquitin-conjugating enzyme]-L-cysteine + [acceptor protein]-L-lysine = [E2 ubiquitin-conjugating enzyme]-L-cysteine + N(6)-ubiquitinyl-[acceptor protein]-L-lysine.. The protein operates within protein modification; protein ubiquitination. E3 ubiquitin-protein ligase that plays a role in different processes including cell differentiation, receptor recycling or regulation of inflammation. Mediates the ubiquitination of AKT1 and GLUL, thereby playing a role in neuron cells differentiation. Plays a role in the establishment and maintenance of neuronal transmission and plasticity. Regulates Schwann cells differentiation by mediating ubiquitination of GLUL. Promotes neurodegeneration by mediating 'Lys-48'-linked polyubiquitination and subsequent degradation of AKT1 in axons: degradation of AKT1 prevents AKT1-mediated phosphorylation of GSK3B, leading to GSK3B activation and phosphorylation of DPYSL2/CRMP2 followed by destabilization of microtubule assembly in axons. Ubiquitinates the Na(+)/K(+) ATPase alpha-1 subunit/ATP1A1 and thereby influences its endocytosis and/or degradation. Controls ligand-induced EGFR signaling via mediating receptor ubiquitination and recruitment of the ESCRT machinery. Acts as a negative feedback mechanism controlling TLR3 trafficking by mediating TLR3 'Lys-63'-linked polyubiquitination to reduce type I IFN production. Modulates inflammation by promoting caveolin-1/CAV1 ubiquitination and degradation to regulate TLR4-activated immune response. The protein is E3 ubiquitin-protein ligase ZNRF1 (Znrf1) of Mus musculus (Mouse).